Consider the following 367-residue polypeptide: tRNA (cytosine(34)-C(5))-methyltransferase, mitochondrial (367 aa).

Residues 170 to 176 (CAAPGGK), Glu-193, Asp-224, and Asp-242 contribute to the S-adenosyl-L-methionine site. The active-site Nucleophile is the Cys-296.

It belongs to the class I-like SAM-binding methyltransferase superfamily. RsmB/NOP family.

The protein resides in the mitochondrion matrix. The catalysed reaction is cytidine(34) in mitochondrial tRNA + S-adenosyl-L-methionine = 5-methylcytidine(34) in mitochondrial tRNA + S-adenosyl-L-homocysteine + H(+). Its function is as follows. Mitochondrial tRNA methyltransferase that mediates methylation of cytosine to 5-methylcytosine (m5C) at position 34 of mt-tRNA(Met). mt-tRNA(Met) methylation at cytosine(34) takes place at the wobble position of the anticodon and initiates the formation of 5-formylcytosine (f(5)c) at this position. mt-tRNA(Met) containing the f(5)c modification at the wobble position enables recognition of the AUA codon in addition to the AUG codon, expanding codon recognition in mitochondrial translation. The sequence is that of tRNA (cytosine(34)-C(5))-methyltransferase, mitochondrial from Danio rerio (Zebrafish).